A 321-amino-acid polypeptide reads, in one-letter code: Ribosomal RNA small subunit methyltransferase H (321 aa).

Residues G43–H45, D63, F89, D110, and Q117 contribute to the S-adenosyl-L-methionine site. The disordered stretch occupies residues H286–A321. Basic and acidic residues-rich tracts occupy residues G295–R304 and V312–A321.

It belongs to the methyltransferase superfamily. RsmH family.

It localises to the cytoplasm. It catalyses the reaction cytidine(1402) in 16S rRNA + S-adenosyl-L-methionine = N(4)-methylcytidine(1402) in 16S rRNA + S-adenosyl-L-homocysteine + H(+). In terms of biological role, specifically methylates the N4 position of cytidine in position 1402 (C1402) of 16S rRNA. This chain is Ribosomal RNA small subunit methyltransferase H, found in Acidithiobacillus ferrooxidans (strain ATCC 23270 / DSM 14882 / CIP 104768 / NCIMB 8455) (Ferrobacillus ferrooxidans (strain ATCC 23270)).